Consider the following 213-residue polypeptide: Signal recognition particle sec65 subunit (213 aa).

The segment at 176–213 (MAALAGMGGPAPPMPTPQASSSQRKQKSIEPEYDLDLE) is disordered.

This sequence belongs to the SRP19 family. In terms of assembly, fungal signal recognition particle consists of a 7S RNA molecule (scR1) and at least six protein subunits: srp72, srp68, srp54, sec65, srp21 and srp14.

It localises to the cytoplasm. It is found in the nucleus. Functionally, signal-recognition-particle assembly has a crucial role in targeting secretory proteins to the rough endoplasmic reticulum membrane. It must be involved intimately in the translocation of a wide variety of protein substrates. This chain is Signal recognition particle sec65 subunit (sec65), found in Schizosaccharomyces pombe (strain 972 / ATCC 24843) (Fission yeast).